The chain runs to 536 residues: Inactive phospholipase D5 (536 aa).

A helical transmembrane segment spans residues 69 to 89; it reads IVIFALVCCFAILVALIFSAV. N121 carries an N-linked (GlcNAc...) asparagine glycan. In terms of domain architecture, PLD phosphodiesterase 1 spans 215 to 242; it reads NKGRLQSSFWIVDKQHVYIGSAGLDWQS. The N-linked (GlcNAc...) asparagine glycan is linked to N302. The 27-residue stretch at 434–460 folds into the PLD phosphodiesterase 2 domain; it reads FPRLNRNKYMVTDGAAYIGNFDWVGND.

This sequence belongs to the phospholipase D family.

It is found in the membrane. This Homo sapiens (Human) protein is Inactive phospholipase D5 (PLD5).